The sequence spans 180 residues: MASSVMSSAAVATSTNAAQASMVAPFTGLKSAASFPVSRKQNLDITSIASNGGRVQCMQVWPPYGKKKYETLSYLPDLTDEQLLKEIEYLLNKGWVPCLEFETEHGFVYREYHASPRYYDGRYWTMWKLPMFGCTDATQVLGELQEAKKAYPNAWIRIIGFDNVRQVQCISFIAYKPPGY.

A chloroplast-targeting transit peptide spans 1–56; that stretch reads MASSVMSSAAVATSTNAAQASMVAPFTGLKSAASFPVSRKQNLDITSIASNGGRVQ.

Belongs to the RuBisCO small chain family. In terms of assembly, heterohexadecamer of 8 large and 8 small subunits.

The protein resides in the plastid. It localises to the chloroplast. Functionally, ruBisCO catalyzes two reactions: the carboxylation of D-ribulose 1,5-bisphosphate, the primary event in carbon dioxide fixation, as well as the oxidative fragmentation of the pentose substrate. Both reactions occur simultaneously and in competition at the same active site. Although the small subunit is not catalytic it is essential for maximal activity. This Petunia hybrida (Petunia) protein is Ribulose bisphosphate carboxylase small subunit, chloroplastic 2.